A 435-amino-acid polypeptide reads, in one-letter code: Nuclear distribution protein nudF 2 (435 aa).

The LisH domain maps to 9–41 (QAEELHKSIIAYLSANGLPETTAILRKELGVTE). 8 WD repeats span residues 86–125 (SHRD…LEVT), 128–171 (GHTR…KNIR), 175–214 (GHDH…CVKT), 217–256 (GHTG…ENKL), 280–320 (APLA…LMTL), 322–361 (GHDN…KCVK), 366–396 (THGG…VRQI), and 397–434 (PDVA…QIFA).

Belongs to the WD repeat LIS1/nudF family. As to quaternary structure, self-associates. Interacts with nudE and dynein.

The protein localises to the cytoplasm. It localises to the cytoskeleton. Its subcellular location is the spindle pole. In terms of biological role, positively regulates the activity of the minus-end directed microtubule motor protein dynein. May enhance dynein-mediated microtubule sliding by targeting dynein to the microtubule plus end. Required for nuclear migration during vegetative growth as well as development. Required for retrograde early endosome (EE) transport from the hyphal tip. Required for localization of dynein to the mitotic spindle poles. Recruits additional proteins to the dynein complex at SPBs. The protein is Nuclear distribution protein nudF 2 of Aspergillus clavatus (strain ATCC 1007 / CBS 513.65 / DSM 816 / NCTC 3887 / NRRL 1 / QM 1276 / 107).